Reading from the N-terminus, the 328-residue chain is Alanine racemase (328 aa).

Lysine 33 (proton acceptor; specific for D-alanine) is an active-site residue. Lysine 33 is modified (N6-(pyridoxal phosphate)lysine). Residue arginine 118 participates in substrate binding. Residue tyrosine 237 is the Proton acceptor; specific for L-alanine of the active site. Methionine 283 is a substrate binding site.

The protein belongs to the alanine racemase family. Pyridoxal 5'-phosphate serves as cofactor.

The enzyme catalyses L-alanine = D-alanine. It functions in the pathway amino-acid biosynthesis; D-alanine biosynthesis; D-alanine from L-alanine: step 1/1. Its function is as follows. Catalyzes the interconversion of L-alanine and D-alanine. May also act on other amino acids. The protein is Alanine racemase (alr) of Campylobacter jejuni subsp. jejuni serotype O:23/36 (strain 81-176).